Consider the following 332-residue polypeptide: Biotin synthase (332 aa).

The 230-residue stretch at 53–282 (YFGKKVKLNM…SKEIRISGGR (230 aa)) folds into the Radical SAM core domain. Cys71, Cys75, and Cys78 together coordinate [4Fe-4S] cluster. Residues Cys115, Cys147, Cys207, and Arg277 each coordinate [2Fe-2S] cluster.

Belongs to the radical SAM superfamily. Biotin synthase family. As to quaternary structure, homodimer. [4Fe-4S] cluster is required as a cofactor. It depends on [2Fe-2S] cluster as a cofactor.

The enzyme catalyses (4R,5S)-dethiobiotin + (sulfur carrier)-SH + 2 reduced [2Fe-2S]-[ferredoxin] + 2 S-adenosyl-L-methionine = (sulfur carrier)-H + biotin + 2 5'-deoxyadenosine + 2 L-methionine + 2 oxidized [2Fe-2S]-[ferredoxin]. It participates in cofactor biosynthesis; biotin biosynthesis; biotin from 7,8-diaminononanoate: step 2/2. Its function is as follows. Catalyzes the conversion of dethiobiotin (DTB) to biotin by the insertion of a sulfur atom into dethiobiotin via a radical-based mechanism. The protein is Biotin synthase of Bacillus cytotoxicus (strain DSM 22905 / CIP 110041 / 391-98 / NVH 391-98).